The sequence spans 253 residues: Protein C1orf43 (253 aa).

Residues 11–31 (VNVVLVMAYGSLVFVLLFIFV) form a helical membrane-spanning segment.

The protein localises to the membrane. It localises to the golgi apparatus. Its subcellular location is the mitochondrion. Its function is as follows. General regulator of phagocytosis. Required to uptake Gram negative bacterium by macrophages. This is Protein C1orf43 (C1orf43) from Homo sapiens (Human).